The primary structure comprises 1047 residues: Ribonucleoside-diphosphate reductase subunit alpha (1047 aa).

3 consecutive ATP-cone domains span residues 9-111 (CTIV…KAHR), 118-219 (LSVI…ARVR), and 237-327 (FEVL…EALD). Substrate-binding positions include threonine 442, 457–458 (SC), glycine 486, 670–674 (NLCTE), and 857–861 (PTATI). Residues cysteine 458 and cysteine 687 are joined by a disulfide bond. The active-site Proton acceptor is the asparagine 670. Cysteine 672 acts as the Cysteine radical intermediate in catalysis. The Proton acceptor role is filled by glutamate 674.

This sequence belongs to the ribonucleoside diphosphate reductase large chain family. As to quaternary structure, tetramer of two alpha and two beta subunits.

It carries out the reaction a 2'-deoxyribonucleoside 5'-diphosphate + [thioredoxin]-disulfide + H2O = a ribonucleoside 5'-diphosphate + [thioredoxin]-dithiol. Its activity is regulated as follows. Under complex allosteric control mediated by deoxynucleoside triphosphates and ATP binding. The type of nucleotide bound at the specificity site determines substrate preference. It seems probable that ATP makes the enzyme reduce CDP and UDP, dGTP favors ADP reduction and dTTP favors GDP reduction. In terms of biological role, provides the precursors necessary for DNA synthesis. Catalyzes the biosynthesis of deoxyribonucleotides from the corresponding ribonucleotides. This chain is Ribonucleoside-diphosphate reductase subunit alpha (nrdA), found in Chlamydia muridarum (strain MoPn / Nigg).